The primary structure comprises 218 residues: uncharacterized protein (218 aa).

Positions 1–24 (MAAQPQAPSAGGRPRAGKAVKSVA) are disordered. The HTH tetR-type domain maps to 28–88 (KLSRESIVEG…AVRIRVIDDI (61 aa)). The segment at residues 51-70 (TINALATQLGTKGPSLYNHV) is a DNA-binding region (H-T-H motif). Threonine 57 carries the post-translational modification Phosphothreonine; by PknH.

In terms of processing, phosphorylated on Thr-57 by PknH.

This is an uncharacterized protein from Mycobacterium tuberculosis (strain ATCC 25618 / H37Rv).